A 552-amino-acid polypeptide reads, in one-letter code: Protein FAM234A (552 aa).

The disordered stretch occupies residues 1 to 40 (MMDDKDLEAEIHPLKNEDKKSQENLGNLPKTEDNLKNKPV). Over 1–49 (MMDDKDLEAEIHPLKNEDKKSQENLGNLPKTEDNLKNKPVPSRLSRCRT) the chain is Cytoplasmic. Positions 8–22 (EAEIHPLKNEDKKSQ) are enriched in basic and acidic residues. The residue at position 21 (S21) is a Phosphoserine. The helical; Signal-anchor for type II membrane protein transmembrane segment at 50-70 (VAFFLSLFICLFVVFVLSFII) threads the bilayer. At 71-552 (PCPDRPSSED…FSRLRYRSEV (482 aa)) the chain is on the extracellular side. N-linked (GlcNAc...) asparagine glycans are attached at residues N116, N119, N314, and N473.

This sequence belongs to the FAM234 family.

It is found in the membrane. This Rattus norvegicus (Rat) protein is Protein FAM234A (Fam234a).